Here is a 78-residue protein sequence, read N- to C-terminus: Acyl carrier protein (78 aa).

The region spanning 1 to 77 (MSEVEKKVID…DAIDYIEKNL (77 aa)) is the Carrier domain. Residue Ser37 is modified to O-(pantetheine 4'-phosphoryl)serine.

The protein belongs to the acyl carrier protein (ACP) family. Post-translationally, 4'-phosphopantetheine is transferred from CoA to a specific serine of apo-ACP by AcpS. This modification is essential for activity because fatty acids are bound in thioester linkage to the sulfhydryl of the prosthetic group.

It is found in the cytoplasm. It participates in lipid metabolism; fatty acid biosynthesis. Functionally, carrier of the growing fatty acid chain in fatty acid biosynthesis. The protein is Acyl carrier protein of Porphyromonas gingivalis (strain ATCC 33277 / DSM 20709 / CIP 103683 / JCM 12257 / NCTC 11834 / 2561).